A 460-amino-acid polypeptide reads, in one-letter code: Cysteine--tRNA ligase (460 aa).

C28 provides a ligand contact to Zn(2+). The 'HIGH' region signature appears at 30 to 40; sequence MTVYDYCHLGH. Zn(2+) is bound by residues C209, H234, and E238. The 'KMSKS' region motif lies at 266 to 270; it reads KMSKS. Residue K269 coordinates ATP.

The protein belongs to the class-I aminoacyl-tRNA synthetase family. Monomer. Zn(2+) serves as cofactor.

The protein localises to the cytoplasm. The catalysed reaction is tRNA(Cys) + L-cysteine + ATP = L-cysteinyl-tRNA(Cys) + AMP + diphosphate. In Thioalkalivibrio sulfidiphilus (strain HL-EbGR7), this protein is Cysteine--tRNA ligase.